Consider the following 436-residue polypeptide: uncharacterized protein (436 aa).

An N-terminal signal peptide occupies residues 1 to 19 (MKKLLLASIIGLASTTSFA).

This is an uncharacterized protein from Rickettsia bellii (strain RML369-C).